Consider the following 508-residue polypeptide: Photosystem II CP47 reaction center protein (508 aa).

Transmembrane regions (helical) follow at residues 21–36 (SVHIMHTALVAGWAGS), 101–115 (IVFSGLCFLAAIWHW), 140–156 (GIHLFLSGVACFGFGAF), 203–218 (IAAGTLGILAGLFHLS), 237–252 (VLSSSIAAVFFAAFVV), and 457–472 (SFALLFFFGHIWHGAR).

The protein belongs to the PsbB/PsbC family. PsbB subfamily. As to quaternary structure, PSII is composed of 1 copy each of membrane proteins PsbA, PsbB, PsbC, PsbD, PsbE, PsbF, PsbH, PsbI, PsbJ, PsbK, PsbL, PsbM, PsbT, PsbX, PsbY, PsbZ, Psb30/Ycf12, at least 3 peripheral proteins of the oxygen-evolving complex and a large number of cofactors. It forms dimeric complexes. Requires Binds multiple chlorophylls. PSII binds additional chlorophylls, carotenoids and specific lipids. as cofactor.

The protein localises to the plastid. The protein resides in the chloroplast thylakoid membrane. In terms of biological role, one of the components of the core complex of photosystem II (PSII). It binds chlorophyll and helps catalyze the primary light-induced photochemical processes of PSII. PSII is a light-driven water:plastoquinone oxidoreductase, using light energy to abstract electrons from H(2)O, generating O(2) and a proton gradient subsequently used for ATP formation. The polypeptide is Photosystem II CP47 reaction center protein (Morus indica (Mulberry)).